We begin with the raw amino-acid sequence, 170 residues long: Histone H1.9 (170 aa).

The H15 domain occupies 34 to 108 (RKPTMSYVIL…GASGSLCLCK (75 aa)). Serine 56 is subject to Phosphoserine. A disordered region spans residues 118–140 (AKRCQDRQKSQKPQKPGQRESEP).

Belongs to the histone H1/H5 family. In terms of tissue distribution, expressed exclusively in the testis by haploid germ cells (at protein level).

Its subcellular location is the nucleus. The protein resides in the chromosome. Its function is as follows. DNA-binding protein that may be implicated in chromatin remodeling and/or transcriptional regulation during spermiogenesis, the process of spermatid maturation into spermatozoa. This Mus musculus (Mouse) protein is Histone H1.9.